The chain runs to 205 residues: MKLDVIKLDGAKAGSVDLDEALFGLEPRADILHRVVRWQRNNAQAGTHKVKTRSEVNYSTKKIYRQKGTGGARHGARSAPIFRGGGVYKGPKVRSHGHELTKKFRKLGLCHALSAKMKAGELVIIDEVSSDGKTAALAKQVANLGWKRALIIDGATVNETFAQAARNIDGLDILPTMGANVYDILKRDTLVITKAGVEALEARLK.

It belongs to the universal ribosomal protein uL4 family. Part of the 50S ribosomal subunit.

Its function is as follows. One of the primary rRNA binding proteins, this protein initially binds near the 5'-end of the 23S rRNA. It is important during the early stages of 50S assembly. It makes multiple contacts with different domains of the 23S rRNA in the assembled 50S subunit and ribosome. In terms of biological role, forms part of the polypeptide exit tunnel. The protein is Large ribosomal subunit protein uL4 of Roseobacter denitrificans (strain ATCC 33942 / OCh 114) (Erythrobacter sp. (strain OCh 114)).